The following is a 22-amino-acid chain: Probable ATP-dependent Clp protease proteolytic subunit (22 aa).

The protein belongs to the peptidase S14 family. In terms of assembly, component of the chloroplastic Clp protease core complex.

The enzyme catalyses Hydrolysis of proteins to small peptides in the presence of ATP and magnesium. alpha-casein is the usual test substrate. In the absence of ATP, only oligopeptides shorter than five residues are hydrolyzed (such as succinyl-Leu-Tyr-|-NHMec, and Leu-Tyr-Leu-|-Tyr-Trp, in which cleavage of the -Tyr-|-Leu- and -Tyr-|-Trp bonds also occurs).. Cleaves peptides in various proteins in a process that requires ATP hydrolysis. Has a chymotrypsin-like activity. Plays a major role in the degradation of misfolded proteins. The protein is Probable ATP-dependent Clp protease proteolytic subunit of Populus euphratica (Euphrates poplar).